The primary structure comprises 291 residues: Phosphatidylserine decarboxylase proenzyme 2 (291 aa).

Residues Asp112 and Ser251 each act as charge relay system; for autoendoproteolytic cleavage activity in the active site. Catalysis depends on Ser251, which acts as the Schiff-base intermediate with substrate; via pyruvic acid; for decarboxylase activity. Ser251 carries the pyruvic acid (Ser); by autocatalysis modification.

Belongs to the phosphatidylserine decarboxylase family. PSD-B subfamily. Prokaryotic type II sub-subfamily. In terms of assembly, heterodimer of a large membrane-associated beta subunit and a small pyruvoyl-containing alpha subunit. Pyruvate serves as cofactor. Is synthesized initially as an inactive proenzyme. Formation of the active enzyme involves a self-maturation process in which the active site pyruvoyl group is generated from an internal serine residue via an autocatalytic post-translational modification. Two non-identical subunits are generated from the proenzyme in this reaction, and the pyruvate is formed at the N-terminus of the alpha chain, which is derived from the carboxyl end of the proenzyme. The autoendoproteolytic cleavage occurs by a canonical serine protease mechanism, in which the side chain hydroxyl group of the serine supplies its oxygen atom to form the C-terminus of the beta chain, while the remainder of the serine residue undergoes an oxidative deamination to produce ammonia and the pyruvoyl prosthetic group on the alpha chain. During this reaction, the Ser that is part of the protease active site of the proenzyme becomes the pyruvoyl prosthetic group, which constitutes an essential element of the active site of the mature decarboxylase.

The protein localises to the cell membrane. The enzyme catalyses a 1,2-diacyl-sn-glycero-3-phospho-L-serine + H(+) = a 1,2-diacyl-sn-glycero-3-phosphoethanolamine + CO2. Its pathway is phospholipid metabolism; phosphatidylethanolamine biosynthesis; phosphatidylethanolamine from CDP-diacylglycerol: step 2/2. Its function is as follows. Catalyzes the formation of phosphatidylethanolamine (PtdEtn) from phosphatidylserine (PtdSer). The sequence is that of Phosphatidylserine decarboxylase proenzyme 2 from Clostridium acetobutylicum (strain ATCC 824 / DSM 792 / JCM 1419 / IAM 19013 / LMG 5710 / NBRC 13948 / NRRL B-527 / VKM B-1787 / 2291 / W).